Here is a 496-residue protein sequence, read N- to C-terminus: Thiamine transporter 2 (496 aa).

The Cytoplasmic portion of the chain corresponds to 1–7 (MDCYRTS). A helical transmembrane segment spans residues 8-28 (LSSSWIYPTVILCLFGFFSMM). Residues 29 to 53 (RPSEPFLIPYLSGPDKNLTSAEITN) are Extracellular-facing. A glycan (N-linked (GlcNAc...) asparagine) is linked at Asn-45. A helical membrane pass occupies residues 54–74 (EIFPVWTYSYLVLLLPVFVLT). Residues 75 to 81 (DYVRYKP) lie on the Cytoplasmic side of the membrane. A helical membrane pass occupies residues 82-102 (VIILQGISFIITWLLLLFGQG). Residues 103-110 (VKTMQVVE) lie on the Extracellular side of the membrane. A helical transmembrane segment spans residues 111–131 (FFYGMVTAAEVAYYAYIYSVV). Residues 132 to 144 (SPEHYQRVSGYCR) lie on the Cytoplasmic side of the membrane. A helical transmembrane segment spans residues 145–165 (SVTLAAYTAGSVLAQLLVSLA). A glycan (N-linked (GlcNAc...) asparagine) is linked at Asn-166. Residues 166–169 (NMSY) are Extracellular-facing. The chain crosses the membrane as a helical span at residues 170–190 (FYLNVISLASVSVAFLFSLFL). The Cytoplasmic segment spans residues 191–282 (PMPKKSMFFH…YSSKRLFYWS (92 aa)). The chain crosses the membrane as a helical span at residues 283-303 (LWWAFATAGFNQVLNYVQILW). The Extracellular segment spans residues 304-316 (DYKAPSQDSSIYN). The helical transmembrane segment at 317 to 337 (GAVEAIATFGGAVAAFAVGYV) threads the bilayer. Residues 338 to 342 (KVNWD) are Cytoplasmic-facing. A helical transmembrane segment spans residues 343–363 (LLGELALVVFSVVNAGSLFLM). The Extracellular segment spans residues 364 to 375 (HYTANIWACYAG). The helical transmembrane segment at 376-396 (YLIFKSSYMLLITIAVFQIAV) threads the bilayer. Residues 397 to 405 (NLNVERYAL) are Cytoplasmic-facing. The helical transmembrane segment at 406 to 426 (VFGINTFIALVIQTIMTVIVV) threads the bilayer. Residues 427–434 (DQRGLNLP) lie on the Extracellular side of the membrane. The chain crosses the membrane as a helical span at residues 435–455 (VSIQFLVYGSYFAVIAGIFLM). The Cytoplasmic portion of the chain corresponds to 456–496 (RSMYITYSTKSQKDVQSPAPSENPDVSHPEEESNIIMSTKL). The interval 468-496 (KDVQSPAPSENPDVSHPEEESNIIMSTKL) is disordered.

It belongs to the reduced folate carrier (RFC) transporter (TC 2.A.48) family. As to expression, widely expressed but most abundant in placenta, kidney and liver.

It localises to the membrane. The enzyme catalyses thiamine(out) + H(+)(in) = thiamine(in) + H(+)(out). It catalyses the reaction pyridoxine(out) + n H(+)(out) = pyridoxine(in) + n H(+)(in). Pyridoxine transport is inhibited by carbonyl cyanide p-trifluoromethoxyphenylhydrazone (FCCP) and carbonyl cyanide m-chlorophenylhydrazone (CCCP). In terms of biological role, mediates high affinity thiamine uptake, probably via a proton anti-port mechanism. Has no folate transport activity. Mediates H(+)-dependent pyridoxine transport. This Homo sapiens (Human) protein is Thiamine transporter 2 (SLC19A3).